The sequence spans 306 residues: Homeobox protein Hox-C13a (306 aa).

A disordered region spans residues 68–90 (SVYSDISSPDTGRQCPAPQTSSS). The segment at residues 236–295 (GRKKRVPYTKLQLKELEKEYAASKFITKDKRRRISAATNLSERQVTIWFQNRRVKEKKFI) is a DNA-binding region (homeobox).

Belongs to the Abd-B homeobox family.

The protein localises to the nucleus. Functionally, sequence-specific transcription factor which is part of a developmental regulatory system that provides cells with specific positional identities on the anterior-posterior axis. This is Homeobox protein Hox-C13a (hoxc13a) from Takifugu rubripes (Japanese pufferfish).